Reading from the N-terminus, the 452-residue chain is Keratin, type II cytoskeletal 80 (452 aa).

Residues 1–82 are head; it reads MAYRSCVVGF…DPAVQQQKNQ (82 aa). S45 carries the phosphoserine modification. Residues 82–118 form a coil 1A region; sequence QEKEEMKVLNDKFASLIGKVQALEQRNQLLETRWGFL. The 312-residue stretch at 83 to 394 folds into the IF rod domain; the sequence is EKEEMKVLND…KLMEGEESRM (312 aa). Residues 119 to 135 are linker 1; that stretch reads QGQGSATFDLSHHYETF. The tract at residues 136–227 is coil 1B; it reads QGRLQEELRK…TVYEQELKDL (92 aa). The interval 228–251 is linker 12; that stretch reads TAQVKDVSVTVGLDSRCHIDLSGI. The tract at residues 252 to 390 is coil 2; it reads VEEVKAQYDA…ATYHKLMEGE (139 aa). The tail stretch occupies residues 391 to 452; that stretch reads ESRMDLPSTT…YLSQESEASE (62 aa). Composition is skewed to polar residues over residues 411 to 421 and 443 to 452; these read TTASKSGLSKT and YLSQESEASE. Residues 411–452 are disordered; it reads TTASKSGLSKTPSRKKKNRGGPVIKITEMSEKYLSQESEASE.

The protein belongs to the intermediate filament family. As to quaternary structure, heterotetramer of two type I and two type II keratins.

The chain is Keratin, type II cytoskeletal 80 (Krt80) from Rattus norvegicus (Rat).